The chain runs to 402 residues: uncharacterized protein (402 aa).

Transmembrane regions (helical) follow at residues 11–31, 48–68, 80–100, 108–125, 140–160, 167–187, 219–239, 254–274, 286–306, 308–328, 347–367, and 373–393; these read LALA…IDMY, LVQL…LIVG, LLIC…SPNI, FLQG…RAIV, LLMV…GAIL, WHTI…LIAL, FMGY…YVSG, VFSI…FIIG, LRIA…MTMI, GPLA…GMVL, SALL…LVGI, and VPMG…FFGL.

This sequence belongs to the major facilitator superfamily. Bcr/CmlA family.

The protein localises to the cell membrane. This is an uncharacterized protein from Bacillus subtilis (strain 168).